Reading from the N-terminus, the 311-residue chain is Olfactory receptor 8B8 (311 aa).

At 1–25 (MAAENSSFVTQFILAGLTDQPGVQI) the chain is on the extracellular side. An N-linked (GlcNAc...) asparagine glycan is attached at Asn-5. A helical transmembrane segment spans residues 26–46 (PLFFLFLGFYVVTVVGNLGLI). Over 47-54 (TLIRLNSH) the chain is Cytoplasmic. The helical transmembrane segment at 55–75 (LHTPMYFFLYNLSFIDFCYSS) threads the bilayer. The Extracellular segment spans residues 76–99 (VITPKMLMSFVLKKNSISYAGCMT). Cys-97 and Cys-189 form a disulfide bridge. A helical transmembrane segment spans residues 100–120 (QLFFFLFFVVSESFILSAMAY). Topologically, residues 121–139 (DRYVAICNPLLYMVTMSPQ) are cytoplasmic. A helical transmembrane segment spans residues 140-160 (VCFLLLLGVYGMGFAGAMAHT). Over 161-197 (ACMMGVTFCANNLVNHYMCDILPLLECACTSTYVNEL) the chain is Extracellular. A helical membrane pass occupies residues 198 to 217 (VVFVVVGIDIGVPTVTIFIS). Topologically, residues 218–237 (YALILSSIFHIDSTEGRSKA) are cytoplasmic. The helical transmembrane segment at 238–258 (FSTCSSHIIAVSLFFGSGAFM) threads the bilayer. Over 259–271 (YLKPFSLLAMNQG) the chain is Extracellular. The chain crosses the membrane as a helical span at residues 272 to 292 (KVSSLFYTTVVPMLNPLIYSL). The Cytoplasmic portion of the chain corresponds to 293-311 (RNKDVKVALKKILNKNAFS).

It belongs to the G-protein coupled receptor 1 family. In terms of tissue distribution, expressed in the tongue and testis.

The protein resides in the cell membrane. In terms of biological role, odorant receptor (Potential). May be involved in taste perception. The protein is Olfactory receptor 8B8 of Homo sapiens (Human).